Consider the following 385-residue polypeptide: Anhydro-N-acetylmuramic acid kinase (385 aa).

12–19 (GTSLDGID) contacts ATP.

It belongs to the anhydro-N-acetylmuramic acid kinase family.

The catalysed reaction is 1,6-anhydro-N-acetyl-beta-muramate + ATP + H2O = N-acetyl-D-muramate 6-phosphate + ADP + H(+). Its pathway is amino-sugar metabolism; 1,6-anhydro-N-acetylmuramate degradation. It functions in the pathway cell wall biogenesis; peptidoglycan recycling. In terms of biological role, catalyzes the specific phosphorylation of 1,6-anhydro-N-acetylmuramic acid (anhMurNAc) with the simultaneous cleavage of the 1,6-anhydro ring, generating MurNAc-6-P. Is required for the utilization of anhMurNAc either imported from the medium or derived from its own cell wall murein, and thus plays a role in cell wall recycling. This Bacillus thuringiensis (strain Al Hakam) protein is Anhydro-N-acetylmuramic acid kinase.